We begin with the raw amino-acid sequence, 479 residues long: Zinc finger and SCAN domain-containing protein 26 (479 aa).

A Glycyl lysine isopeptide (Lys-Gly) (interchain with G-Cter in SUMO2) cross-link involves residue Lys-17. The SCAN box domain maps to 51 to 133; it reads CKRFRQLRYE…VFLEDLQLEL (83 aa). Residues 155–187 are disordered; it reads TAPGKATPERQVQPEGDVPQPEREKGEAKRIEN. Basic and acidic residues predominate over residues 174–187; it reads QPEREKGEAKRIEN. The C2H2-type 1; degenerate zinc finger occupies 232–254; sequence CKCSEYGQAFFQHSDLIKHESSH. 7 consecutive C2H2-type zinc fingers follow at residues 283–305, 311–333, 339–361, 367–389, 395–417, 423–445, and 451–473; these read HQCH…QKIH, YQCK…LRIH, YLCI…QRIH, CQCK…QRIH, HQCN…HRIH, FKCT…VRIH, and YKCN…QRYH.

Its subcellular location is the nucleus. Its function is as follows. May be involved in transcriptional regulation. The sequence is that of Zinc finger and SCAN domain-containing protein 26 (ZSCAN26) from Bos taurus (Bovine).